The chain runs to 54 residues: Large ribosomal subunit protein bL32 (54 aa).

Residues 1–24 (MAVQKSKPTRSKRGMRRSHDSLKE) form a disordered region. Basic residues predominate over residues 7–16 (KPTRSKRGMR).

This sequence belongs to the bacterial ribosomal protein bL32 family.

The polypeptide is Large ribosomal subunit protein bL32 (Buchnera aphidicola subsp. Schizaphis graminum (strain Sg)).